We begin with the raw amino-acid sequence, 394 residues long: Na(+)/H(+) antiporter NhaA (394 aa).

The next 11 helical transmembrane spans lie at 24 to 44 (AGLVLMACALAAIAVANSPLA), 58 to 78 (LSVQHWVNDGLMAVFFLLVGL), 96 to 116 (TLPGVAAVGGMAIPGIVYVML), 126 to 146 (GWAIPAATDIAFALGVMSLLG), 155 to 175 (IFLAALAIIDDLGAVIIIAIF), 180 to 200 (INVATLLGAVFVFGILRSLCA), 214 to 234 (AVLWVLLLVSGVHATLAGVLL), 267 to 287 (VAFAILPIFGFANAGVSFASI), 300 to 320 (VAAGLLIGKVVGIFGAVALMV), 336 to 356 (VLGVAFLCGIGFTMSLFIGLL), and 370 to 390 (GILAGSLLAGVLGYGILRIAG).

Belongs to the NhaA Na(+)/H(+) (TC 2.A.33) antiporter family.

The protein localises to the cell inner membrane. The catalysed reaction is Na(+)(in) + 2 H(+)(out) = Na(+)(out) + 2 H(+)(in). Functionally, na(+)/H(+) antiporter that extrudes sodium in exchange for external protons. This Azorhizobium caulinodans (strain ATCC 43989 / DSM 5975 / JCM 20966 / LMG 6465 / NBRC 14845 / NCIMB 13405 / ORS 571) protein is Na(+)/H(+) antiporter NhaA.